We begin with the raw amino-acid sequence, 326 residues long: Biotin synthase (326 aa).

A Radical SAM core domain is found at Asn47–Arg274. Residues Cys62, Cys66, and Cys69 each coordinate [4Fe-4S] cluster. [2Fe-2S] cluster-binding residues include Cys106, Cys137, Cys197, and Arg269.

This sequence belongs to the radical SAM superfamily. Biotin synthase family. As to quaternary structure, homodimer. The cofactor is [4Fe-4S] cluster. It depends on [2Fe-2S] cluster as a cofactor.

It catalyses the reaction (4R,5S)-dethiobiotin + (sulfur carrier)-SH + 2 reduced [2Fe-2S]-[ferredoxin] + 2 S-adenosyl-L-methionine = (sulfur carrier)-H + biotin + 2 5'-deoxyadenosine + 2 L-methionine + 2 oxidized [2Fe-2S]-[ferredoxin]. It functions in the pathway cofactor biosynthesis; biotin biosynthesis; biotin from 7,8-diaminononanoate: step 2/2. Its function is as follows. Catalyzes the conversion of dethiobiotin (DTB) to biotin by the insertion of a sulfur atom into dethiobiotin via a radical-based mechanism. This chain is Biotin synthase, found in Methylococcus capsulatus (strain ATCC 33009 / NCIMB 11132 / Bath).